Reading from the N-terminus, the 183-residue chain is MDIDPYKEFGASVELLSFLPSDFFPSVRDLLDTASALYREALESPEHCSPHHTALRQATLCWGELMNLATWVGSNLADPASRDLVVNYVNVNMGLKFRQLLWFHISCLTFGRETVLEYLVSFGVWIRTPPAYRPPNAPILSTLPETTVVRRRGRSPRRRTPSPRRRRSQSPRRRRSKSRESQC.

The tract at residues 136–183 (NAPILSTLPETTVVRRRGRSPRRRTPSPRRRRSQSPRRRRSKSRESQC) is disordered. The segment covering 149-177 (VRRRGRSPRRRTPSPRRRRSQSPRRRRSK) has biased composition (basic residues). Phosphoserine; by host is present on residues Ser155, Ser162, and Ser170. The stretch at 155–160 (SPRRRT) is one 1; half-length repeat. Residues 155-176 (SPRRRTPSPRRRRSQSPRRRRS) are 3 X 7 AA repeats of S-P-R-R-R-[PR]-S. Positions 158–175 (RRTPSPRRRRSQSPRRRR) match the Bipartite nuclear localization signal motif. 2 repeat units span residues 162-168 (SPRRRRS) and 170-176 (SPRRRRS). Residues 177-183 (KSRESQC) are RNA binding.

Belongs to the orthohepadnavirus core antigen family. As to quaternary structure, homodimerizes, then multimerizes. Interacts with cytosol exposed regions of viral L glycoprotein present in the reticulum-to-Golgi compartment. Interacts with human FLNB. Phosphorylated form interacts with host importin alpha; this interaction depends on the exposure of the NLS, which itself depends upon genome maturation and/or phosphorylation of the capsid protein. Interacts with host NUP153. Phosphorylated by host SRPK1, SRPK2, and maybe protein kinase C or GAPDH. Phosphorylation is critical for pregenomic RNA packaging. Protein kinase C phosphorylation is stimulated by HBx protein and may play a role in transport of the viral genome to the nucleus at the late step during the viral replication cycle.

The protein localises to the virion. It is found in the host cytoplasm. In terms of biological role, self assembles to form an icosahedral capsid. Most capsids appear to be large particles with an icosahedral symmetry of T=4 and consist of 240 copies of capsid protein, though a fraction forms smaller T=3 particles consisting of 180 capsid proteins. Entering capsids are transported along microtubules to the nucleus. Phosphorylation of the capsid is thought to induce exposure of nuclear localization signal in the C-terminal portion of the capsid protein that allows binding to the nuclear pore complex via the importin (karyopherin-) alpha and beta. Capsids are imported in intact form through the nuclear pore into the nuclear basket, where it probably binds NUP153. Only capsids that contain the mature viral genome can release the viral DNA and capsid protein into the nucleoplasm. Immature capsids get stuck in the basket. Capsids encapsulate the pre-genomic RNA and the P protein. Pre-genomic RNA is reverse-transcribed into DNA while the capsid is still in the cytoplasm. The capsid can then either be directed to the nucleus, providing more genomes for transcription, or bud through the endoplasmic reticulum to provide new virions. This chain is Capsid protein, found in Hepatitis B virus genotype C subtype ar (isolate Japan/S-207/1988) (HBV-C).